A 201-amino-acid chain; its full sequence is dITP/XTP pyrophosphatase (201 aa).

8–13 (TTNENK) is a binding site for substrate. Residue aspartate 68 is the Proton acceptor of the active site. Residue aspartate 68 coordinates Mg(2+). Substrate-binding positions include serine 69, 155–158 (FGYD), lysine 177, and 182–183 (HR).

Belongs to the HAM1 NTPase family. Homodimer. Requires Mg(2+) as cofactor.

It catalyses the reaction XTP + H2O = XMP + diphosphate + H(+). It carries out the reaction dITP + H2O = dIMP + diphosphate + H(+). The enzyme catalyses ITP + H2O = IMP + diphosphate + H(+). In terms of biological role, pyrophosphatase that catalyzes the hydrolysis of nucleoside triphosphates to their monophosphate derivatives, with a high preference for the non-canonical purine nucleotides XTP (xanthosine triphosphate), dITP (deoxyinosine triphosphate) and ITP. Seems to function as a house-cleaning enzyme that removes non-canonical purine nucleotides from the nucleotide pool, thus preventing their incorporation into DNA/RNA and avoiding chromosomal lesions. This Borreliella burgdorferi (strain ATCC 35210 / DSM 4680 / CIP 102532 / B31) (Borrelia burgdorferi) protein is dITP/XTP pyrophosphatase.